The sequence spans 334 residues: MAAVVFIAFLYLGVASGVPVLDSSLDAEWQDWKIKYNKSYSLKEEKLKRVVWEEKLKMIKLHNRENSLGKNGFTMKMNEFGDQTDEEFRKMMIEISVWTHREGKSIMKREAGSILPKFVDWRKKGYVTPVRRQGDCDACWAFAVTGAIEAQAIWQTGKLTPLSVQNLVDCSKPQGNNGCLGGDTYNAFQYVLHNGGLESEATYPYEGKDGPCRYNPKNSKAEITGFVSLPQSEDILMAAVATIGPITAGIDASHESFKNYKGGIYHEPNCSSDTVTHGVLVVGYGFKGIETDGNHYWLIKNSWGKRWGIRGYMKLAKDKNNHCGIASYAHYPTI.

The signal sequence occupies residues 1–17; sequence MAAVVFIAFLYLGVASG. Residues 18–114 constitute a propeptide, activation peptide; sequence VPVLDSSLDA…SIMKREAGSI (97 aa). 2 cysteine pairs are disulfide-bonded: Cys-136-Cys-179 and Cys-170-Cys-212. The active site involves Cys-139. Asn-269 is a glycosylation site (N-linked (GlcNAc...) asparagine). Cys-270 and Cys-323 form a disulfide bridge. Residues His-277 and Asn-301 contribute to the active site.

The protein belongs to the peptidase C1 family. As to expression, placenta.

It localises to the lysosome. The protein is Cathepsin R (Ctsr) of Mus musculus (Mouse).